A 504-amino-acid polypeptide reads, in one-letter code: Putative F-box/FBD/LRR-repeat protein At3g59240 (504 aa).

The F-box domain maps to 7–60 (KDIISDLPEALICHLLSFVPTKEAALTSLLSEKWRYLFAFAPILDFDDSVWMQS). 7 LRR repeats span residues 69-95 (HRKF…SLNC), 145-171 (RIRT…DLSS), 173-198 (WFRD…TMSD), 286-312 (TNLF…TFCC), 329-354 (DKDV…VFKG), 369-396 (CLCK…KFGE), and 403-428 (DEEK…ILHY). Residues 382–427 (SSSPVKVLKILKFGEVASYFGDEEKQLELVKYFLETMPNLEQMILH) form the FBD domain.

In Arabidopsis thaliana (Mouse-ear cress), this protein is Putative F-box/FBD/LRR-repeat protein At3g59240.